The chain runs to 396 residues: Elongation factor Tu 2 (396 aa).

The region spanning 10–206 (KPHCNVGTIG…AVDDYIPQPE (197 aa)) is the tr-type G domain. A G1 region spans residues 19–26 (GHVDHGKT). Residue 19–26 (GHVDHGKT) coordinates GTP. Mg(2+) is bound at residue Thr-26. Residues 60–64 (GITIS) form a G2 region. The segment at 81 to 84 (DCPG) is G3. GTP-binding positions include 81 to 85 (DCPGH) and 136 to 139 (NKCD). Residues 136 to 139 (NKCD) form a G4 region. A G5 region spans residues 174–176 (SAL).

This sequence belongs to the TRAFAC class translation factor GTPase superfamily. Classic translation factor GTPase family. EF-Tu/EF-1A subfamily. In terms of assembly, monomer.

It localises to the cytoplasm. The catalysed reaction is GTP + H2O = GDP + phosphate + H(+). Its function is as follows. GTP hydrolase that promotes the GTP-dependent binding of aminoacyl-tRNA to the A-site of ribosomes during protein biosynthesis. The polypeptide is Elongation factor Tu 2 (Rhodospirillum rubrum (strain ATCC 11170 / ATH 1.1.1 / DSM 467 / LMG 4362 / NCIMB 8255 / S1)).